The sequence spans 577 residues: Gamma-tubulin complex component gfh1 (577 aa).

Belongs to the TUBGCP family.

It is found in the cytoplasm. The protein resides in the cytoskeleton. The protein localises to the microtubule organizing center. It localises to the spindle pole body. Required for proper anchoring of astral microtubules at the spindle pole bodies (SPBs), during anaphase, ensuring correct cell polarity. This chain is Gamma-tubulin complex component gfh1 (gfh1), found in Schizosaccharomyces pombe (strain 972 / ATCC 24843) (Fission yeast).